A 215-amino-acid chain; its full sequence is Cytochrome b6 (215 aa).

A helical membrane pass occupies residues I32 to F52. C35 serves as a coordination point for heme c. 2 residues coordinate heme b: H86 and H100. 3 helical membrane-spanning segments follow: residues A90 to F110, L116 to Y136, and L186 to I206. Heme b-binding residues include H187 and H202.

The protein belongs to the cytochrome b family. PetB subfamily. In terms of assembly, the 4 large subunits of the cytochrome b6-f complex are cytochrome b6, subunit IV (17 kDa polypeptide, PetD), cytochrome f and the Rieske protein, while the 4 small subunits are PetG, PetL, PetM and PetN. The complex functions as a dimer. Heme b is required as a cofactor. Requires heme c as cofactor.

Its subcellular location is the plastid. The protein resides in the chloroplast thylakoid membrane. In terms of biological role, component of the cytochrome b6-f complex, which mediates electron transfer between photosystem II (PSII) and photosystem I (PSI), cyclic electron flow around PSI, and state transitions. In Nymphaea alba (White water-lily), this protein is Cytochrome b6.